The chain runs to 68 residues: Small ribosomal subunit protein bS21 (68 aa).

This sequence belongs to the bacterial ribosomal protein bS21 family.

The protein is Small ribosomal subunit protein bS21 of Endomicrobium trichonymphae.